A 379-amino-acid polypeptide reads, in one-letter code: MDNLANQGVIVLAAGGTGGHLFPAEALAHELRARGWDVHLATDARAQRFVGAFAQDHVHVIRSATIAGRNPVALLKTFWSLWQGNLDSRKLFRRLKPKLVVGFGGYPTLPPLYAASNMGIPTLIHEQNAVMGRANKGLAGRVKAIAGGFLPENSGAYAAKTVITGNPVRSPVLVAAATPYTPAGKDDRFRLLVFGGSQGAQFFSQAIPAAVALLPEHERARLLITQQARKEDEASARQAYEKLGVPADVAPFFNDMPARMADAHFVIARSGASTVSEITVIGRPAMLVPFPHALDHDQAANAAALAAAGGAEVVRQADLSPQRLAEMLQSAMNELERLEQQAKAAKSVGKPDAARLLADLAEAIASGKTVQEFKEGNRP.

Residues 17–19, Asn128, Arg169, Ser197, and Gln298 each bind UDP-N-acetyl-alpha-D-glucosamine; that span reads TGG.

The protein belongs to the glycosyltransferase 28 family. MurG subfamily.

It is found in the cell inner membrane. It carries out the reaction di-trans,octa-cis-undecaprenyl diphospho-N-acetyl-alpha-D-muramoyl-L-alanyl-D-glutamyl-meso-2,6-diaminopimeloyl-D-alanyl-D-alanine + UDP-N-acetyl-alpha-D-glucosamine = di-trans,octa-cis-undecaprenyl diphospho-[N-acetyl-alpha-D-glucosaminyl-(1-&gt;4)]-N-acetyl-alpha-D-muramoyl-L-alanyl-D-glutamyl-meso-2,6-diaminopimeloyl-D-alanyl-D-alanine + UDP + H(+). It participates in cell wall biogenesis; peptidoglycan biosynthesis. Cell wall formation. Catalyzes the transfer of a GlcNAc subunit on undecaprenyl-pyrophosphoryl-MurNAc-pentapeptide (lipid intermediate I) to form undecaprenyl-pyrophosphoryl-MurNAc-(pentapeptide)GlcNAc (lipid intermediate II). The protein is UDP-N-acetylglucosamine--N-acetylmuramyl-(pentapeptide) pyrophosphoryl-undecaprenol N-acetylglucosamine transferase of Brucella melitensis biotype 2 (strain ATCC 23457).